We begin with the raw amino-acid sequence, 234 residues long: Putative methyltransferase-like protein 15P1 (234 aa).

S-adenosyl-L-methionine is bound by residues Gly100 to His102, Asp119, Phe146, Asp169, and Gln176.

The protein belongs to the methyltransferase superfamily. RsmH family.

Probable S-adenosyl-L-methionine-dependent methyltransferase. The protein is Putative methyltransferase-like protein 15P1 (METTL15P1) of Homo sapiens (Human).